The primary structure comprises 83 residues: Small ribosomal subunit protein uS17 (83 aa).

This sequence belongs to the universal ribosomal protein uS17 family. In terms of assembly, part of the 30S ribosomal subunit.

One of the primary rRNA binding proteins, it binds specifically to the 5'-end of 16S ribosomal RNA. This chain is Small ribosomal subunit protein uS17, found in Francisella tularensis subsp. holarctica (strain FTNF002-00 / FTA).